Reading from the N-terminus, the 392-residue chain is uncharacterized protein (392 aa).

The N-terminal stretch at 1–19 is a signal peptide; sequence MRRIVCPPVLFLSASLLTG. C20 carries N-palmitoyl cysteine lipidation. A lipid anchor (S-diacylglycerol cysteine) is attached at C20. Residues 148 to 173 form a disordered region; it reads SSGSSGGGGGGSGSSSDGGIKNGSDE. Residues 151 to 160 show a composition bias toward gly residues; that stretch reads SSGGGGGGSG.

It belongs to the TP013X lipoprotein family.

The protein resides in the cell membrane. This is an uncharacterized protein from Treponema pallidum (strain Nichols).